Consider the following 125-residue polypeptide: Protein Turandot F (125 aa).

A signal peptide spans Met-1–Ala-19.

It belongs to the Turandot family.

The protein resides in the secreted. Its function is as follows. A humoral factor that may play a role in stress tolerance. In Drosophila melanogaster (Fruit fly), this protein is Protein Turandot F.